The sequence spans 638 residues: 1-deoxy-D-xylulose-5-phosphate synthase (638 aa).

Residues H71 and 112–114 (SHA) contribute to the thiamine diphosphate site. D144 is a binding site for Mg(2+). Thiamine diphosphate contacts are provided by residues 145-146 (GA), N173, Y284, and E365. Position 173 (N173) interacts with Mg(2+).

The protein belongs to the transketolase family. DXPS subfamily. In terms of assembly, homodimer. Mg(2+) serves as cofactor. The cofactor is thiamine diphosphate.

It carries out the reaction D-glyceraldehyde 3-phosphate + pyruvate + H(+) = 1-deoxy-D-xylulose 5-phosphate + CO2. The protein operates within metabolic intermediate biosynthesis; 1-deoxy-D-xylulose 5-phosphate biosynthesis; 1-deoxy-D-xylulose 5-phosphate from D-glyceraldehyde 3-phosphate and pyruvate: step 1/1. Its function is as follows. Catalyzes the acyloin condensation reaction between C atoms 2 and 3 of pyruvate and glyceraldehyde 3-phosphate to yield 1-deoxy-D-xylulose-5-phosphate (DXP). The chain is 1-deoxy-D-xylulose-5-phosphate synthase from Mycobacterium sp. (strain KMS).